The sequence spans 138 residues: Small ribosomal subunit protein uS11c (138 aa).

Residues 1 to 23 form a disordered region; that stretch reads MAKTIPRIGSRKNGRIGSRKNTR. Residues 9 to 23 show a composition bias toward basic residues; it reads GSRKNGRIGSRKNTR.

This sequence belongs to the universal ribosomal protein uS11 family. In terms of assembly, part of the 30S ribosomal subunit.

It localises to the plastid. It is found in the chloroplast. In Daucus carota (Wild carrot), this protein is Small ribosomal subunit protein uS11c.